The sequence spans 179 residues: Replication restart protein DnaT (179 aa).

Residues 156 to 179 form a disordered region; it reads GGLPKRDVNTVSEPDSQIPPGFRG.

The protein belongs to the DnaT family. Homooligomerizes. Interacts with PriB. Component of the replication restart primosome. Primosome assembly occurs via a 'hand-off' mechanism. PriA binds to replication forks, subsequently PriB then DnaT bind; DnaT then displaces ssDNA to generate the helicase loading substrate.

Its function is as follows. Involved in the restart of stalled replication forks, which reloads the replicative helicase on sites other than the origin of replication. Can function in multiple replication restart pathways. Displaces ssDNA from a PriB-ssDNA complex. Probably forms a spiral filament on ssDNA. This Escherichia coli O81 (strain ED1a) protein is Replication restart protein DnaT.